We begin with the raw amino-acid sequence, 142 residues long: UPF0179 protein PYRAB06360 (142 aa).

Belongs to the UPF0179 family.

This Pyrococcus abyssi (strain GE5 / Orsay) protein is UPF0179 protein PYRAB06360.